The primary structure comprises 284 residues: uncharacterized protein (284 aa).

Positions 1-23 are cleaved as a signal peptide; that stretch reads MKRGCAIAVMICGLITSVSAASA.

Belongs to the surface antigen msp4 family.

This is an uncharacterized protein from Brucella melitensis biotype 1 (strain ATCC 23456 / CCUG 17765 / NCTC 10094 / 16M).